Consider the following 422-residue polypeptide: COUP transcription factor 1 (422 aa).

The segment at 1–80 (MAMVVSSWRD…QGPPGSGQSQ (80 aa)) is disordered. Positions 39-66 (EQQQAGSGAPHTPQTPGQPGAPATPGTQ) are enriched in low complexity. The segment at residues 82 to 157 (HIECVVCGDK…VGMRREAVQR (76 aa)) is a DNA-binding region (nuclear receptor). NR C4-type zinc fingers lie at residues 85 to 105 (CVVCGDKSSGKHYGQFTCEGC) and 121 to 145 (CRANRNCPIDQHHRNQCQYCRLKKC). The NR LBD domain occupies 183 to 409 (YLSGYISLLL…TLIRDMLLSG (227 aa)). An important for dimerization region spans residues 343–422 (LQEKSQCALE…NWPYMSIQCS (80 aa)).

Belongs to the nuclear hormone receptor family. NR2 subfamily. Binds DNA as dimer; homodimer and probable heterodimer with NR2F6. Interacts with GTF2B; this interaction is direct. Interacts with COPS2.

It localises to the nucleus. Its function is as follows. Coup (chicken ovalbumin upstream promoter) transcription factor binds to the ovalbumin promoter and, in conjunction with another protein (S300-II) stimulates initiation of transcription. Binds to both direct repeats and palindromes of the 5'-AGGTCA-3' motif. Represses transcriptional activity of LHCG. The chain is COUP transcription factor 1 (Nr2f1) from Mus musculus (Mouse).